The primary structure comprises 312 residues: tRNA pseudouridine synthase B (312 aa).

D46 functions as the Nucleophile in the catalytic mechanism. The substrate site is built by Y74, Y177, and L198.

It belongs to the pseudouridine synthase TruB family. Type 1 subfamily.

The catalysed reaction is uridine(55) in tRNA = pseudouridine(55) in tRNA. Responsible for synthesis of pseudouridine from uracil-55 in the psi GC loop of transfer RNAs. This is tRNA pseudouridine synthase B from Buchnera aphidicola subsp. Acyrthosiphon pisum (strain APS) (Acyrthosiphon pisum symbiotic bacterium).